A 99-amino-acid chain; its full sequence is HTH-type transcriptional regulator YgaV (99 aa).

One can recognise an HTH arsR-type domain in the interval 7 to 99; the sequence is LQASAEQAAA…IATLKNVYCP (93 aa). Positions 41–64 form a DNA-binding region, H-T-H motif; the sequence is AGELTRITGLSASATSQHLARMRD.

Its activity is regulated as follows. In the presence of H(2)S, two cysteine residues form an intramolecular tetrasulfide bond, which attenuates the binding of YgaV to DNA. Both unmodified YgaV and sulfide-modified YgaV can probably function as either a repressor or an activator. Binds heme, which may influence the DNA-binding affinity. Functionally, transcriptional regulator that regulates large-scale gene expression in response to sulfide. May act as a global regulator responsible for redox homeostasis. It functions as both a repressor and an activator. In the absence of sulfide compounds, it negatively regulates many anaerobic respiratory genes, including formate, fumarate, lactate, nitrate and nitrite reductase genes. In the presence of hydrogen sulfide (H(2)S), YgaV activity is attenuated, leading to the expression of anaerobic respiratory and ROS scavenging genes, which contributes to redox homeostasis, reactive oxygen species (ROS) scavenging and antibiotic tolerance. It responds to H(2)O(2) scavenging and increases antibiotic tolerance under H(2)S-atmospheric conditions. It also negatively regulates its own expression by binding to the ygaVP promoter region. May also be involved in regulatory mechanisms that operate independently of sulfide. This Escherichia coli (strain K12) protein is HTH-type transcriptional regulator YgaV (ygaV).